A 556-amino-acid chain; its full sequence is Endoglucanase 22 (556 aa).

The signal sequence occupies residues Met-1 to Ala-33. Asp-108 serves as the catalytic Nucleophile. Residues His-450, Asp-502, and Glu-511 contribute to the active site.

It belongs to the glycosyl hydrolase 9 (cellulase E) family.

The protein resides in the secreted. The catalysed reaction is Endohydrolysis of (1-&gt;4)-beta-D-glucosidic linkages in cellulose, lichenin and cereal beta-D-glucans.. This Oryza sativa subsp. japonica (Rice) protein is Endoglucanase 22 (GLU11).